We begin with the raw amino-acid sequence, 218 residues long: 3,4-dihydroxy-2-butanone 4-phosphate synthase (218 aa).

Residues 38-39, aspartate 43, 151-155, and glutamate 175 each bind D-ribulose 5-phosphate; these read RE and RRGHT. A Mg(2+)-binding site is contributed by glutamate 39. Histidine 154 provides a ligand contact to Mg(2+).

Belongs to the DHBP synthase family. In terms of assembly, homodimer. The cofactor is Mg(2+). It depends on Mn(2+) as a cofactor.

The catalysed reaction is D-ribulose 5-phosphate = (2S)-2-hydroxy-3-oxobutyl phosphate + formate + H(+). It functions in the pathway cofactor biosynthesis; riboflavin biosynthesis; 2-hydroxy-3-oxobutyl phosphate from D-ribulose 5-phosphate: step 1/1. Functionally, catalyzes the conversion of D-ribulose 5-phosphate to formate and 3,4-dihydroxy-2-butanone 4-phosphate. The protein is 3,4-dihydroxy-2-butanone 4-phosphate synthase of Vibrio vulnificus (strain CMCP6).